The chain runs to 368 residues: MATLSAARCLVVKIGSALLVDQASGALRQDWLTGLAQDVAEIRARGADVILVSSGSIALGRRVLGLGTGALPLEQAQAAAAVGQIRLARAYEEVLAPHKITTAQVLVTLEDSTDRRRYLNTRATLGTLLSLGVTPIVNENDTIATDEIRYGDNDRLAAQVAVMAGADQLVLLSDVDGLYTANPATDPTATRFDRVDEITPEIEAMAGDAVSGLSKGGMKTKLMAARTAMDAGCAMAITEGARPRPLKALMDGAPATWFVPRTDPLAARKHWIAAMKPRGEITVDAGACAALKRGKSLLPAGITEVSGAFGRGDPVIILAPDGTALGRGLTRYTAVEARAIRGHRSAEIEAVLGYPGRAVLIHRDDMVL.

Lysine 13 serves as a coordination point for ATP. The substrate site is built by serine 54, aspartate 141, and asparagine 153. An ATP-binding site is contributed by 173 to 174 (SD). The PUA domain occupies 278-355 (RGEITVDAGA…AEIEAVLGYP (78 aa)).

This sequence belongs to the glutamate 5-kinase family.

It is found in the cytoplasm. The catalysed reaction is L-glutamate + ATP = L-glutamyl 5-phosphate + ADP. It participates in amino-acid biosynthesis; L-proline biosynthesis; L-glutamate 5-semialdehyde from L-glutamate: step 1/2. Functionally, catalyzes the transfer of a phosphate group to glutamate to form L-glutamate 5-phosphate. In Dinoroseobacter shibae (strain DSM 16493 / NCIMB 14021 / DFL 12), this protein is Glutamate 5-kinase.